The following is a 223-amino-acid chain: Thiamine-phosphate synthase (223 aa).

4-amino-2-methyl-5-(diphosphooxymethyl)pyrimidine contacts are provided by residues Gln37–Lys41 and Asp72. 2 residues coordinate Mg(2+): Asp73 and Asp92. Ser110 lines the 4-amino-2-methyl-5-(diphosphooxymethyl)pyrimidine pocket. A 2-[(2R,5Z)-2-carboxy-4-methylthiazol-5(2H)-ylidene]ethyl phosphate-binding site is contributed by Thr136–Ser138. Lys139 contributes to the 4-amino-2-methyl-5-(diphosphooxymethyl)pyrimidine binding site. Residues Gly168 and Ile188–Ser189 contribute to the 2-[(2R,5Z)-2-carboxy-4-methylthiazol-5(2H)-ylidene]ethyl phosphate site.

It belongs to the thiamine-phosphate synthase family. Mg(2+) is required as a cofactor.

It carries out the reaction 2-[(2R,5Z)-2-carboxy-4-methylthiazol-5(2H)-ylidene]ethyl phosphate + 4-amino-2-methyl-5-(diphosphooxymethyl)pyrimidine + 2 H(+) = thiamine phosphate + CO2 + diphosphate. The enzyme catalyses 2-(2-carboxy-4-methylthiazol-5-yl)ethyl phosphate + 4-amino-2-methyl-5-(diphosphooxymethyl)pyrimidine + 2 H(+) = thiamine phosphate + CO2 + diphosphate. The catalysed reaction is 4-methyl-5-(2-phosphooxyethyl)-thiazole + 4-amino-2-methyl-5-(diphosphooxymethyl)pyrimidine + H(+) = thiamine phosphate + diphosphate. It participates in cofactor biosynthesis; thiamine diphosphate biosynthesis; thiamine phosphate from 4-amino-2-methyl-5-diphosphomethylpyrimidine and 4-methyl-5-(2-phosphoethyl)-thiazole: step 1/1. Its function is as follows. Condenses 4-methyl-5-(beta-hydroxyethyl)thiazole monophosphate (THZ-P) and 2-methyl-4-amino-5-hydroxymethyl pyrimidine pyrophosphate (HMP-PP) to form thiamine monophosphate (TMP). The chain is Thiamine-phosphate synthase from Streptococcus agalactiae serotype Ia (strain ATCC 27591 / A909 / CDC SS700).